The following is a 690-amino-acid chain: Copper-exporting P-type ATPase B (690 aa).

Over 1 to 64 the chain is Cytoplasmic; that stretch reads MHEHDSHGEA…MEDFKKRFYV (64 aa). A disordered region spans residues 23-46; sequence QHHEHHGHEEEHSAHHEKMKHSAD. The segment covering 28–46 has biased composition (basic and acidic residues); the sequence is HGHEEEHSAHHEKMKHSAD. A helical membrane pass occupies residues 65–85; that stretch reads STLLTIPILILSPAIQTFLGF. Residues 86–91 lie on the Extracellular side of the membrane; that stretch reads RVEFAG. Residues 92-112 traverse the membrane as a helical segment; sequence SLYILFLLSSAVYFYGGYPFL. Residues 113–127 lie on the Cytoplasmic side of the membrane; it reads KGIFDELRRRQPGMM. A helical membrane pass occupies residues 128 to 148; that stretch reads TLIAVAISVAYFYSSAVVFGL. The Extracellular segment spans residues 149-151; it reads KGK. Residues 152–172 traverse the membrane as a helical segment; that stretch reads FFFWELATLIDIMLLGHYIEM. Residues 173-303 lie on the Cytoplasmic side of the membrane; it reads RSVLGASRAL…KSRTQDLANR (131 aa). A helical membrane pass occupies residues 304–324; the sequence is AALLLTVIALTVGSVTLAIWL. The Extracellular portion of the chain corresponds to 325–336; it reads AYIADFAFAIER. Residues 337–357 form a helical membrane-spanning segment; the sequence is AVTVMVITCPHALGLAIPLVV. Over 358–640 the chain is Cytoplasmic; sequence AVSTSLAAKS…RKTYSKMKQN (283 aa). Catalysis depends on Asp-389, which acts as the 4-aspartylphosphate intermediate. Residues 390 to 391, 537 to 538, and Lys-565 each bind phosphate; these read KT and TG. 2 residues coordinate Mg(2+): Asp-583 and Asp-587. The chain crosses the membrane as a helical span at residues 641-661; the sequence is LLWATGYNAFAIPLAAGVLYS. Residues 662-663 are Extracellular-facing; it reads AG. The helical transmembrane segment at 664–684 threads the bilayer; it reads ILLSPAVGAILMSLSTVIVAI. Topologically, residues 685-690 are cytoplasmic; the sequence is NARLLR.

Belongs to the cation transport ATPase (P-type) (TC 3.A.3) family. Type IB subfamily.

The protein resides in the cell membrane. It carries out the reaction Cu(2+)(in) + ATP + H2O = Cu(2+)(out) + ADP + phosphate + H(+). Activated by Cu(2+) and to a lesser extent by Ag(+) and Cu(+). Its function is as follows. Involved in copper export. The chain is Copper-exporting P-type ATPase B (copB) from Archaeoglobus fulgidus (strain ATCC 49558 / DSM 4304 / JCM 9628 / NBRC 100126 / VC-16).